The chain runs to 266 residues: Imidazole glycerol phosphate synthase subunit HisF (266 aa).

Catalysis depends on residues aspartate 11 and aspartate 130.

It belongs to the HisA/HisF family. In terms of assembly, heterodimer of HisH and HisF.

Its subcellular location is the cytoplasm. It catalyses the reaction 5-[(5-phospho-1-deoxy-D-ribulos-1-ylimino)methylamino]-1-(5-phospho-beta-D-ribosyl)imidazole-4-carboxamide + L-glutamine = D-erythro-1-(imidazol-4-yl)glycerol 3-phosphate + 5-amino-1-(5-phospho-beta-D-ribosyl)imidazole-4-carboxamide + L-glutamate + H(+). The protein operates within amino-acid biosynthesis; L-histidine biosynthesis; L-histidine from 5-phospho-alpha-D-ribose 1-diphosphate: step 5/9. IGPS catalyzes the conversion of PRFAR and glutamine to IGP, AICAR and glutamate. The HisF subunit catalyzes the cyclization activity that produces IGP and AICAR from PRFAR using the ammonia provided by the HisH subunit. The polypeptide is Imidazole glycerol phosphate synthase subunit HisF (Delftia acidovorans (strain DSM 14801 / SPH-1)).